The following is a 245-amino-acid chain: Protein canopy homolog 4 (245 aa).

A signal peptide spans 1–27 (MCGLRFIMGPVRLEILLFILAAYGAWA). 3 disulfide bridges follow: C44/C202, C47/C190, and C100/C162. The interval 207–245 (WTGKEKISDGQEEADDEEEEEEEEITKTSGNPKHDPEDL) is disordered. A coiled-coil region spans residues 209-237 (GKEKISDGQEEADDEEEEEEEEITKTSGN). Residues 216 to 230 (GQEEADDEEEEEEEE) are compositionally biased toward acidic residues.

The protein belongs to the canopy family. Interacts with TLR4. In terms of tissue distribution, highly expressed in lung, spleen, thymus, and uterus. Moderately expressed in kidney, stomach and placenta. Weakly expressed in brain, heart, liver, small intestine, skeletal muscle and testis.

The protein resides in the secreted. In terms of biological role, plays a role in the regulation of the cell surface expression of TLR4. The polypeptide is Protein canopy homolog 4 (Cnpy4) (Mus musculus (Mouse)).